A 294-amino-acid polypeptide reads, in one-letter code: tRNA dimethylallyltransferase (294 aa).

10–17 (GPTAVGKT) contacts ATP. 12–17 (TAVGKT) is a binding site for substrate. Residues 35–38 (DSQQ) are interaction with substrate tRNA.

Belongs to the IPP transferase family. Monomer. The cofactor is Mg(2+).

It carries out the reaction adenosine(37) in tRNA + dimethylallyl diphosphate = N(6)-dimethylallyladenosine(37) in tRNA + diphosphate. Its function is as follows. Catalyzes the transfer of a dimethylallyl group onto the adenine at position 37 in tRNAs that read codons beginning with uridine, leading to the formation of N6-(dimethylallyl)adenosine (i(6)A). This chain is tRNA dimethylallyltransferase, found in Streptococcus mutans serotype c (strain ATCC 700610 / UA159).